Here is a 250-residue protein sequence, read N- to C-terminus: Protein lin-28 homolog B (250 aa).

The segment at 1–26 (MAEGGASKGGGEEPGKLPEPAEEESQ) is disordered. The region spanning 29–102 (RGTGHCKWFN…GLESIRVTGP (74 aa)) is the CSD domain. Phosphoserine is present on residues Ser54, Ser96, Ser105, and Ser110. A disordered region spans residues 98 to 126 (RVTGPGGSPCLGSERRPKGKTLQKRKPKG). The Bipartite nuclear localization signal motif lies at 112-125 (RRPKGKTLQKRKPK). Residues 114–125 (PKGKTLQKRKPK) show a composition bias toward basic residues. 2 CCHC-type zinc fingers span residues 127–144 (DRCYNCGGLDHHAKECSL) and 149–166 (KKCHYCQSIMHMVANCPH). Residues Cys129, Cys132, His137, Cys142, Cys151, Cys154, His159, and Cys164 each coordinate Zn(2+). The interval 169–250 (VAQPPASSQG…GPSVQKRKKT (82 aa)) is disordered. The span at 173–191 (PASSQGRQEAESQPCTSTL) shows a compositional bias: polar residues. Ser203 carries the post-translational modification Phosphoserine. Residues 210 to 219 (ARAEISERSG) are compositionally biased toward basic and acidic residues. Over residues 220-231 (RSPQEASSTKSS) the composition is skewed to polar residues. Residues 239–250 (KKGPSVQKRKKT) carry the Nucleolar localization signal motif.

It belongs to the lin-28 family. Expressed at high levels in the placenta and, at mucher lower, in testis and fetal liver. Isoform 1 is only detected in placenta and in moderately and poorly differentiated hepatocellular carcinoma cells (at protein level). Isoform 2 is detected in fetal liver, non-tumor liver tissues, as well as well-differentiated tumor tissues (at protein level). Tends to be up-regulated in triple-negative (ER-,PR-,HER2-) breast tumors, as well as in liver, ovarian, and thyroid carcinomas.

It is found in the nucleus. The protein localises to the nucleolus. The protein resides in the cytoplasm. In terms of biological role, suppressor of microRNA (miRNA) biogenesis, including that of let-7 and possibly of miR107, miR-143 and miR-200c. Binds primary let-7 transcripts (pri-let-7), including pri-let-7g and pri-let-7a-1, and sequester them in the nucleolus, away from the microprocessor complex, hence preventing their processing into mature miRNA. Does not act on pri-miR21. The repression of let-7 expression is required for normal development and contributes to maintain the pluripotent state of embryonic stem cells by preventing let-7-mediated differentiation. When overexpressed, recruits ZCCHC11/TUT4 uridylyltransferase to pre-let-7 transcripts, leading to their terminal uridylation and degradation. This activity might not be relevant in vivo, as LIN28B-mediated inhibition of let-7 miRNA maturation appears to be ZCCHC11-independent. Interaction with target pre-miRNAs occurs via an 5'-GGAG-3' motif in the pre-miRNA terminal loop. Mediates MYC-induced let-7 repression. When overexpressed, isoform 1 stimulates growth of the breast adenocarcinoma cell line MCF-7. Isoform 2 has no effect on cell growth. This is Protein lin-28 homolog B (LIN28B) from Homo sapiens (Human).